The primary structure comprises 468 residues: Glutamate--tRNA ligase (468 aa).

A 'HIGH' region motif is present at residues Pro-10–Gly-20. Residues Cys-99, Cys-101, Cys-126, and Asp-128 each contribute to the Zn(2+) site. A 'KMSKS' region motif is present at residues Arg-236–Arg-240. An ATP-binding site is contributed by Lys-239.

This sequence belongs to the class-I aminoacyl-tRNA synthetase family. Glutamate--tRNA ligase type 1 subfamily. In terms of assembly, monomer. It depends on Zn(2+) as a cofactor.

It localises to the cytoplasm. The catalysed reaction is tRNA(Glu) + L-glutamate + ATP = L-glutamyl-tRNA(Glu) + AMP + diphosphate. Catalyzes the attachment of glutamate to tRNA(Glu) in a two-step reaction: glutamate is first activated by ATP to form Glu-AMP and then transferred to the acceptor end of tRNA(Glu). The sequence is that of Glutamate--tRNA ligase from Syntrophobacter fumaroxidans (strain DSM 10017 / MPOB).